Here is a 336-residue protein sequence, read N- to C-terminus: tRNA N6-adenosine threonylcarbamoyltransferase (336 aa).

Positions 111 and 115 each coordinate Fe cation. Substrate is bound by residues 134-138 (LVSGG), Asp-167, Gly-180, and Asn-271. Asp-299 lines the Fe cation pocket.

Belongs to the KAE1 / TsaD family. Fe(2+) is required as a cofactor.

The protein localises to the cytoplasm. The catalysed reaction is L-threonylcarbamoyladenylate + adenosine(37) in tRNA = N(6)-L-threonylcarbamoyladenosine(37) in tRNA + AMP + H(+). Required for the formation of a threonylcarbamoyl group on adenosine at position 37 (t(6)A37) in tRNAs that read codons beginning with adenine. Is involved in the transfer of the threonylcarbamoyl moiety of threonylcarbamoyl-AMP (TC-AMP) to the N6 group of A37, together with TsaE and TsaB. TsaD likely plays a direct catalytic role in this reaction. The polypeptide is tRNA N6-adenosine threonylcarbamoyltransferase (Thioalkalivibrio sulfidiphilus (strain HL-EbGR7)).